A 738-amino-acid polypeptide reads, in one-letter code: Envelope glycoprotein gp160 (738 aa).

The first 21 residues, 1–21 (MCGKSLLCVASLLASAYLVYC), serve as a signal peptide directing secretion. Residues 22–670 (TQYVTVFYGV…LTSWIKYIQY (649 aa)) lie on the Extracellular side of the membrane. Residue Asn-36 is glycosylated (N-linked (GlcNAc...) asparagine; by host). Cys-43 and Cys-56 form a disulfide bridge. Asn-69, Asn-113, Asn-117, Asn-118, Asn-132, Asn-141, Asn-169, Asn-182, Asn-197, Asn-229, Asn-232, Asn-263, Asn-269, Asn-280, Asn-291, Asn-301, Asn-356, Asn-362, Asn-389, Asn-402, Asn-439, Asn-454, and Asn-457 each carry an N-linked (GlcNAc...) asparagine; by host glycan. Disulfide bonds link Cys-100–Cys-205, Cys-107–Cys-196, Cys-112–Cys-153, Cys-218–Cys-248, and Cys-228–Cys-240. The segment at 112–152 (CNSTTNNTTTTGSTTGMSEINETSPSYSDNCTGLGKEEIVN) is V1. Residues 153-196 (CQFYMTGLERDKKKQYNETWYSKDVVCESNNTKDGKNRCYMNHC) are V2. The V3 stretch occupies residues 296-328 (CKRPGNKTVVPITLMSGLVFHSQPINTRPRQAW). A disulfide bridge connects residues Cys-296 and Cys-329. 2 disulfides stabilise this stretch: Cys-381/Cys-438 and Cys-388/Cys-411. Residues 388 to 411 (CNMTWFLNWVENRPNQTQHNYAPC) are V4. Residues 454–460 (NQTNITF) are V5. The tract at residues 503–523 (GVFVLGFLGFLATAGSAMGAA) is fusion peptide. Residues 566–582 (LQARVTAIEKYLKDQAQ) form an immunosuppression region. Asn-602, Asn-611, and Asn-627 each carry an N-linked (GlcNAc...) asparagine; by host glycan. A coiled-coil region spans residues 615–636 (QEWEKQVRYLEANISQSLEQAQ). An MPER; binding to GalCer region spans residues 648–669 (KLNSWDVFGNWFDLTSWIKYIQ). A helical transmembrane segment spans residues 671 to 691 (GVYIVVGVIVLRIAIYIVQLL). The Cytoplasmic portion of the chain corresponds to 692 to 738 (SRLRKGYRPVFSSPPGYLQQIHIHTDRGQPANEGTEEDDRDDDGYDL). The YXXV motif; contains endocytosis signal motif lies at 698 to 701 (YRPV). The interval 716–738 (TDRGQPANEGTEEDDRDDDGYDL) is disordered. The segment covering 725 to 738 (GTEEDDRDDDGYDL) has biased composition (acidic residues).

As to quaternary structure, the mature envelope protein (Env) consists of a homotrimer of non-covalently associated gp120-gp41 heterodimers. The resulting complex protrudes from the virus surface as a spike. There seems to be as few as 10 spikes on the average virion. Interacts with human CD4, CCR5 and CXCR4, to form a P4HB/PDI-CD4-CXCR4-gp120 complex. Gp120 also interacts with the C-type lectins CD209/DC-SIGN and CLEC4M/DC-SIGNR (collectively referred to as DC-SIGN(R)). Gp120 and gp41 interact with GalCer. In terms of assembly, the mature envelope protein (Env) consists of a homotrimer of non-covalently associated gp120-gp41 heterodimers. The resulting complex protrudes from the virus surface as a spike. There seems to be as few as 10 spikes on the average virion. In terms of processing, specific enzymatic cleavages in vivo yield mature proteins. Envelope glycoproteins are synthesized as an inactive precursor that is heavily N-glycosylated and processed likely by host cell furin in the Golgi to yield the mature SU and TM proteins. The cleavage site between SU and TM requires the minimal sequence [KR]-X-[KR]-R. Post-translationally, palmitoylation of the transmembrane protein and of Env polyprotein (prior to its proteolytic cleavage) is essential for their association with host cell membrane lipid rafts. Palmitoylation is therefore required for envelope trafficking to classical lipid rafts, but not for viral replication.

It is found in the virion membrane. Its subcellular location is the host cell membrane. The protein localises to the host endosome membrane. Functionally, the surface protein gp120 (SU) attaches the virus to the host lymphoid cell by binding to the primary receptor CD4. This interaction induces a structural rearrangement creating a high affinity binding site for a chemokine coreceptor like CXCR4 and/or CCR5. This peculiar 2 stage receptor-interaction strategy allows gp120 to maintain the highly conserved coreceptor-binding site in a cryptic conformation, protected from neutralizing antibodies. Since CD4 also displays a binding site for the disulfide-isomerase P4HB/PDI, a P4HB/PDI-CD4-CXCR4-gp120 complex may form. In that complex, P4HB/PDI could reach and reduce gp120 disulfide bonds, causing major conformational changes in gp120. TXN, another PDI family member could also be involved in disulfide rearrangements in Env during fusion. These changes are transmitted to the transmembrane protein gp41 and are thought to activate its fusogenic potential by unmasking its fusion peptide. The surface protein gp120 is a ligand for CD209/DC-SIGN and CLEC4M/DC-SIGNR, which are respectively found on dendritic cells (DCs), and on endothelial cells of liver sinusoids and lymph node sinuses. These interactions allow capture of viral particles at mucosal surfaces by these cells and subsequent transmission to permissive cells. DCs are professional antigen presenting cells, critical for host immunity by inducing specific immune responses against a broad variety of pathogens. They act as sentinels in various tissues where they take up antigen, process it, and present it to T-cells following migration to lymphoid organs. HIV subverts the migration properties of dendritic cells to gain access to CD4+ T-cells in lymph nodes. Virus transmission to permissive T-cells occurs either in trans (without DCs infection, through viral capture and transmission), or in cis (following DCs productive infection, through the usual CD4-gp120 interaction), thereby inducing a robust infection. In trans infection, bound virions remain infectious over days and it is proposed that they are not degraded, but protected in non-lysosomal acidic organelles within the DCs close to the cell membrane thus contributing to the viral infectious potential during DCs' migration from the periphery to the lymphoid tissues. On arrival at lymphoid tissues, intact virions recycle back to DCs' cell surface allowing virus transmission to CD4+ T-cells. Virion capture also seems to lead to MHC-II-restricted viral antigen presentation, and probably to the activation of HIV-specific CD4+ cells. In terms of biological role, the transmembrane protein gp41 (TM) acts as a class I viral fusion protein. Under the current model, the protein has at least 3 conformational states: pre-fusion native state, pre-hairpin intermediate state, and post-fusion hairpin state. During fusion of viral and target intracellular membranes, the coiled coil regions (heptad repeats) assume a trimer-of-hairpins structure, positioning the fusion peptide in close proximity to the C-terminal region of the ectodomain. The formation of this structure appears to drive apposition and subsequent fusion of viral and target cell membranes. Complete fusion occurs in host cell endosomes and is dynamin-dependent, however some lipid transfer might occur at the plasma membrane. The virus undergoes clathrin-dependent internalization long before endosomal fusion, thus minimizing the surface exposure of conserved viral epitopes during fusion and reducing the efficacy of inhibitors targeting these epitopes. Membranes fusion leads to delivery of the nucleocapsid into the cytoplasm. Its function is as follows. The envelope glycoprotein gp160 precursor down-modulates cell surface CD4 antigen by interacting with it in the endoplasmic reticulum and blocking its transport to the cell surface. Functionally, the gp120-gp41 heterodimer seems to contribute to T-cell depletion during HIV-1 infection. The envelope glycoproteins expressed on the surface of infected cells induce apoptosis through an interaction with uninfected cells expressing the receptor (CD4) and the coreceptors CXCR4 or CCR5. This type of bystander killing may be obtained by at least three distinct mechanisms. First, the interaction between the 2 cells can induce cellular fusion followed by nuclear fusion within the syncytium. Syncytia are condemned to die from apoptosis. Second, the 2 interacting cells may not fuse entirely and simply exchange plasma membrane lipids, after a sort of hemifusion process, followed by rapid death. Third, it is possible that virus-infected cells, on the point of undergoing apoptosis, fuse with CD4-expressing cells, in which case apoptosis is rapidly transmitted from one cell to the other and thus occurs in a sort of contagious fashion. The gp120-gp41 heterodimer allows rapid transcytosis of the virus through CD4 negative cells such as simple epithelial monolayers of the intestinal, rectal and endocervical epithelial barriers. Both gp120 and gp41 specifically recognize glycosphingolipids galactosyl-ceramide (GalCer) or 3' sulfo-galactosyl-ceramide (GalS) present in the lipid rafts structures of epithelial cells. Binding to these alternative receptors allows the rapid transcytosis of the virus through the epithelial cells. This transcytotic vesicle-mediated transport of virions from the apical side to the basolateral side of the epithelial cells does not involve infection of the cells themselves. This Human immunodeficiency virus type 2 subtype A (isolate Ghana-1) (HIV-2) protein is Envelope glycoprotein gp160 (env).